The primary structure comprises 418 residues: Glutamyl-tRNA reductase (418 aa).

Residues 49-52, Ser-109, 114-116, and Gln-120 contribute to the substrate site; these read TCNR and EPQ. The Nucleophile role is filled by Cys-50. Position 189 to 194 (189 to 194) interacts with NADP(+); that stretch reads GAGETI.

The protein belongs to the glutamyl-tRNA reductase family. As to quaternary structure, homodimer.

It carries out the reaction (S)-4-amino-5-oxopentanoate + tRNA(Glu) + NADP(+) = L-glutamyl-tRNA(Glu) + NADPH + H(+). The protein operates within porphyrin-containing compound metabolism; protoporphyrin-IX biosynthesis; 5-aminolevulinate from L-glutamyl-tRNA(Glu): step 1/2. In terms of biological role, catalyzes the NADPH-dependent reduction of glutamyl-tRNA(Glu) to glutamate 1-semialdehyde (GSA). The protein is Glutamyl-tRNA reductase of Escherichia coli O1:K1 / APEC.